The following is a 782-amino-acid chain: Protein NEDD1 (782 aa).

WD repeat units lie at residues 1–34 (MMSN…GDPC), 41–80 (SPGC…LGTV), 90–130 (SAEE…CIKK), 133–172 (GHTS…RATE), 176–216 (PNGQ…PKMS), 220–260 (QHSA…SSSC), 262–301 (AYEA…QPVT), and 307–358 (SNSE…TPSA). Disordered regions lie at residues 350-393 (PLPS…WPSG) and 467-512 (PIFD…EAWG). Polar residues-rich tracts occupy residues 352–362 (PSTTPSASQSA), 370–386 (VSAS…TPNR), and 488–498 (SFGSITPTASS). Residues 753 to 782 (VLSSILENQAEQMKELKLLRKENQELRQRL) adopt a coiled-coil conformation.

As to expression, expressed in root meristematic cells.

The protein resides in the nucleus envelope. The protein localises to the chromosome. Its subcellular location is the centromere. It localises to the kinetochore. It is found in the cytoplasm. The protein resides in the cytoskeleton. The protein localises to the phragmoplast. Its subcellular location is the microtubule organizing center. In terms of biological role, regulates microtubules organization in a centrosome-independent manner. Required for the spindle to be positioned correctly and for the function of gamma-tubulin in organizing phragmoplast microtubules. Component of active gamma-tubulin ring complexes (gamma-TuRCs) associated with cortical microtubules in interphase cells. Mediates gamma-TuRC recruitment to the nucleation sites and is important for determining the ratio of branched to parallel nucleation. May mediate the localization of GCP2 and GCP3 to the nuclear envelope. This Arabidopsis thaliana (Mouse-ear cress) protein is Protein NEDD1.